The sequence spans 369 residues: Cyclic AMP receptor-like protein A (369 aa).

Over 1–4 the chain is Extracellular; sequence MIQI. Residues 5-22 traverse the membrane as a helical segment; it reads LLSTFISFIIIIVSSNDI. Topologically, residues 23-72 are cytoplasmic; sequence RSGENDNFNNNKMINNFLTTITTNDTIIIKETESPNDYDFSKEQIESLDK. Residues 73 to 93 form a helical membrane-spanning segment; sequence IVYFSSTMGIVGALFIIVSFF. Residues 94-100 are Extracellular-facing; sequence LFKAART. Residues 101-121 traverse the membrane as a helical segment; that stretch reads FATKMIFFLSLSDLFAAIFYL. Residues 122 to 146 lie on the Cytoplasmic side of the membrane; that stretch reads PYYRDSDIMCNLQGMGLVFFLSSSY. A helical transmembrane segment spans residues 147–167; it reads LWTMCISISLFMVFFTTIFEL. Over 168–173 the chain is Extracellular; it reads NHWFKY. Residues 174–194 traverse the membrane as a helical segment; the sequence is FHFICWGIPLFTAIISLIFHA. The Cytoplasmic segment spans residues 195–212; that stretch reads YGKTGSWCFISDPTSIFR. The chain crosses the membrane as a helical span at residues 213–233; that stretch reads LLYYLPLIVVFFINLVVFIAI. At 234-247 the chain is on the extracellular side; it reads RWKISQHSNSLVSR. A helical transmembrane segment spans residues 248-268; that stretch reads VNIIVSFYLIAFSLSQLPTII. The Cytoplasmic portion of the chain corresponds to 269 to 369; the sequence is NSIQNFSDPD…KLIIDDYNRV (101 aa).

The protein belongs to the G-protein coupled receptor 5 family.

The protein localises to the membrane. In terms of biological role, receptor for cAMP which may play a role in prestalk cell differentiation. May act as a negative regulator of cell growth. The protein is Cyclic AMP receptor-like protein A (crlA) of Dictyostelium discoideum (Social amoeba).